The primary structure comprises 377 residues: NIF3-like protein 1 (377 aa).

The residue at position 109 (K109) is an N6-acetyllysine. The segment at 244–377 (LLLHTGMGRL…ETDRDPLQVV (134 aa)) is mediates interaction with COPS2. T255 bears the Phosphothreonine mark. S259 is modified (phosphoserine).

Belongs to the GTP cyclohydrolase I type 2/NIF3 family. As to quaternary structure, homodimer. Interacts with COPS2. Interacts with THOC7.

It localises to the cytoplasm. It is found in the nucleus. May function as a transcriptional corepressor through its interaction with COPS2, negatively regulating the expression of genes involved in neuronal differentiation. This Homo sapiens (Human) protein is NIF3-like protein 1.